The sequence spans 262 residues: MSDILDKILSVKRDEVAAGSVARPLAQVRAEVEALAAPRNFVGAIRAKIAAGDAAVIAEIKKASPSKGVIREDFRPAEIALQYERGGAACLSVLTDRQFFQGAPAYLQAARAACSLPVLRKDFLVDPWQVYEARAMGADAVLLIVAALDLAAMRDMEAVAGSLGMAVLVEAHDAAELDVALQLSTPLVGINNRNLRTFDVSLQTTLDLLARVPAGRIVVTESGILAPADVALMRANAVNAFLVGEAFMRVPDPGEGLRSLFG.

Belongs to the TrpC family.

The enzyme catalyses 1-(2-carboxyphenylamino)-1-deoxy-D-ribulose 5-phosphate + H(+) = (1S,2R)-1-C-(indol-3-yl)glycerol 3-phosphate + CO2 + H2O. It participates in amino-acid biosynthesis; L-tryptophan biosynthesis; L-tryptophan from chorismate: step 4/5. The polypeptide is Indole-3-glycerol phosphate synthase (Aromatoleum aromaticum (strain DSM 19018 / LMG 30748 / EbN1) (Azoarcus sp. (strain EbN1))).